We begin with the raw amino-acid sequence, 190 residues long: Lipid A acyltransferase PagP (190 aa).

Residues 1–18 (MKRLISCLTIICALNASA) form the signal peptide. Catalysis depends on residues H60, D103, and S104.

Belongs to the lipid A palmitoyltransferase family. In terms of assembly, homodimer.

Its subcellular location is the cell outer membrane. It carries out the reaction a lipid A + a 1,2-diacyl-sn-glycero-3-phosphocholine = a hepta-acyl lipid A + a 2-acyl-sn-glycero-3-phosphocholine. The enzyme catalyses a lipid IVA + a 1,2-diacyl-sn-glycero-3-phosphocholine = a lipid IVB + a 2-acyl-sn-glycero-3-phosphocholine. It catalyses the reaction a lipid IIA + a 1,2-diacyl-sn-glycero-3-phosphocholine = a lipid IIB + a 2-acyl-sn-glycero-3-phosphocholine. In terms of biological role, transfers a fatty acid residue from the sn-1 position of a phospholipid to the N-linked hydroxyfatty acid chain on the proximal unit of lipid A or its precursors. The chain is Lipid A acyltransferase PagP from Legionella pneumophila serogroup 1 (strain 2300/99 Alcoy).